Consider the following 387-residue polypeptide: Capsid protein (387 aa).

Over residues 1 to 33 the composition is skewed to basic residues; that stretch reads MARTKSKPRKRTTVRKARRSVKRRTTTKGTKRK. Disordered stretches follow at residues 1–47 and 365–387; these read MART…RGVA and KSAK…REFN. 2 short sequence motifs (nuclear localization signal) span residues 8 to 15 and 30 to 37; these read PRKRTTVR and TKRKTAGD. Low complexity predominate over residues 370–379; that stretch reads NDQLNNNQDA.

It is found in the host nucleus. It localises to the virion. Self-assembles to form the virion icosahedral capsid. The protein is Capsid protein of Chaetoceros protobacilladnavirus 2 (Chaetoceros sp. DNA virus 7).